The sequence spans 274 residues: Large ribosomal subunit protein uL2 (274 aa).

Positions V220 to T259 are disordered. Basic and acidic residues predominate over residues P227–A239. Residues K249–T259 show a composition bias toward basic residues.

The protein belongs to the universal ribosomal protein uL2 family. As to quaternary structure, part of the 50S ribosomal subunit. Forms a bridge to the 30S subunit in the 70S ribosome.

One of the primary rRNA binding proteins. Required for association of the 30S and 50S subunits to form the 70S ribosome, for tRNA binding and peptide bond formation. It has been suggested to have peptidyltransferase activity; this is somewhat controversial. Makes several contacts with the 16S rRNA in the 70S ribosome. The protein is Large ribosomal subunit protein uL2 of Chloroflexus aggregans (strain MD-66 / DSM 9485).